The following is a 90-amino-acid chain: UPF0367 protein PMT9312_0127 (90 aa).

Belongs to the UPF0367 family.

In Prochlorococcus marinus (strain MIT 9312), this protein is UPF0367 protein PMT9312_0127.